The following is a 1036-amino-acid chain: Isoleucine--tRNA ligase (1036 aa).

Positions 46–56 (PFATGLPHYGH) match the 'HIGH' region motif. A 'KMSKS' region motif is present at residues 589-593 (KMSKR). An ATP-binding site is contributed by Lys592.

It belongs to the class-I aminoacyl-tRNA synthetase family. IleS type 2 subfamily. Monomer. Zn(2+) is required as a cofactor.

The protein resides in the cytoplasm. It carries out the reaction tRNA(Ile) + L-isoleucine + ATP = L-isoleucyl-tRNA(Ile) + AMP + diphosphate. Catalyzes the attachment of isoleucine to tRNA(Ile). As IleRS can inadvertently accommodate and process structurally similar amino acids such as valine, to avoid such errors it has two additional distinct tRNA(Ile)-dependent editing activities. One activity is designated as 'pretransfer' editing and involves the hydrolysis of activated Val-AMP. The other activity is designated 'posttransfer' editing and involves deacylation of mischarged Val-tRNA(Ile). The polypeptide is Isoleucine--tRNA ligase (Chlamydia trachomatis serovar A (strain ATCC VR-571B / DSM 19440 / HAR-13)).